The primary structure comprises 165 residues: 2-C-methyl-D-erythritol 2,4-cyclodiphosphate synthase (165 aa).

A divalent metal cation-binding residues include aspartate 11 and histidine 13. 4-CDP-2-C-methyl-D-erythritol 2-phosphate contacts are provided by residues 11-13 (DVH) and 40-41 (HS). A divalent metal cation is bound at residue histidine 48. 4-CDP-2-C-methyl-D-erythritol 2-phosphate-binding positions include 62 to 64 (DIG), 67 to 71 (FPDTD), 137 to 140 (TTSE), phenylalanine 144, and arginine 147.

It belongs to the IspF family. Homotrimer. Requires a divalent metal cation as cofactor.

The enzyme catalyses 4-CDP-2-C-methyl-D-erythritol 2-phosphate = 2-C-methyl-D-erythritol 2,4-cyclic diphosphate + CMP. It functions in the pathway isoprenoid biosynthesis; isopentenyl diphosphate biosynthesis via DXP pathway; isopentenyl diphosphate from 1-deoxy-D-xylulose 5-phosphate: step 4/6. Its function is as follows. Involved in the biosynthesis of isopentenyl diphosphate (IPP) and dimethylallyl diphosphate (DMAPP), two major building blocks of isoprenoid compounds. Catalyzes the conversion of 4-diphosphocytidyl-2-C-methyl-D-erythritol 2-phosphate (CDP-ME2P) to 2-C-methyl-D-erythritol 2,4-cyclodiphosphate (ME-CPP) with a corresponding release of cytidine 5-monophosphate (CMP). The polypeptide is 2-C-methyl-D-erythritol 2,4-cyclodiphosphate synthase (Rubrobacter xylanophilus (strain DSM 9941 / JCM 11954 / NBRC 16129 / PRD-1)).